A 578-amino-acid chain; its full sequence is Serine/threonine-protein kinase D6PKL3 (578 aa).

Residues 1 to 24 show a composition bias toward low complexity; sequence MDSSSSVVYVGSSSKSRNFQSKSK. Residues 1 to 64 form a disordered region; the sequence is MDSSSSVVYV…EVIESSVSSV (64 aa). Residues 25-34 are compositionally biased toward polar residues; sequence GSITSFSIDS. Positions 53-64 are enriched in low complexity; the sequence is SPEVIESSVSSV. The region spanning 182–516 is the Protein kinase domain; it reads FKLIKKLGGG…ATEIKQHPFF (335 aa). ATP is bound by residues 188 to 196 and K211; that span reads LGGGDIGNV. D307 acts as the Proton acceptor in catalysis. The tract at residues 325–426 is activation loop; the sequence is DFDLSLRCAV…VGTHEYLAPE (102 aa). The short motif at 575-578 is the PIF element; that stretch reads IDFF.

It belongs to the protein kinase superfamily. AGC Ser/Thr protein kinase family. In terms of tissue distribution, expressed predominantly in root tissue with lower levels found in leaf, stem, seed and flower.

It is found in the cell membrane. The catalysed reaction is L-seryl-[protein] + ATP = O-phospho-L-seryl-[protein] + ADP + H(+). It carries out the reaction L-threonyl-[protein] + ATP = O-phospho-L-threonyl-[protein] + ADP + H(+). Functionally, protein kinase that regulates the auxin transport activity of PIN auxin efflux facilitators by direct phosphorylation. D6PK-mediated PIN phosphorylation promotes auxin transport in the hypocotyl and this is a prerequisite for PHOT1-dependent hypocotyl bending. The sequence is that of Serine/threonine-protein kinase D6PKL3 (D6PKL3) from Arabidopsis thaliana (Mouse-ear cress).